Here is a 250-residue protein sequence, read N- to C-terminus: Small ribosomal subunit protein uS3 (250 aa).

In terms of domain architecture, KH type-2 spans 39–109 (IRNYVQARLK…EVKIDVVEVI (71 aa)). A compositionally biased stretch (basic and acidic residues) spans 225–239 (INERRGDSKSRPRDP). Residues 225–250 (INERRGDSKSRPRDPRNKRRRRTKRS) form a disordered region. Basic residues predominate over residues 240–250 (RNKRRRRTKRS).

Belongs to the universal ribosomal protein uS3 family. Part of the 30S ribosomal subunit. Forms a tight complex with proteins S10 and S14.

Functionally, binds the lower part of the 30S subunit head. Binds mRNA in the 70S ribosome, positioning it for translation. This is Small ribosomal subunit protein uS3 from Chlorobium phaeobacteroides (strain DSM 266 / SMG 266 / 2430).